Here is a 244-residue protein sequence, read N- to C-terminus: Orotidine 5'-phosphate decarboxylase (244 aa).

Substrate-binding positions include Asp-10, Lys-32, 59–68 (DLKLHDIPNT), Thr-122, Arg-184, Gln-193, Gly-213, and Arg-214. Lys-61 functions as the Proton donor in the catalytic mechanism.

This sequence belongs to the OMP decarboxylase family. Type 1 subfamily. Homodimer.

The enzyme catalyses orotidine 5'-phosphate + H(+) = UMP + CO2. It functions in the pathway pyrimidine metabolism; UMP biosynthesis via de novo pathway; UMP from orotate: step 2/2. Its function is as follows. Catalyzes the decarboxylation of orotidine 5'-monophosphate (OMP) to uridine 5'-monophosphate (UMP). The protein is Orotidine 5'-phosphate decarboxylase of Geobacillus kaustophilus (strain HTA426).